The following is a 484-amino-acid chain: Aspartyl aminopeptidase (484 aa).

Methionine 1 bears the N-acetylmethionine mark. A Zn(2+)-binding site is contributed by histidine 84. Histidine 159 serves as a coordination point for substrate. A compositionally biased stretch (low complexity) spans 188–206 (PVESKSTTTTTTTESPKTS). The tract at residues 188 to 213 (PVESKSTTTTTTTESPKTSDPQDVNS) is disordered. Aspartate 266 provides a ligand contact to Zn(2+). Glutamate 301 contributes to the substrate binding site. Residues glutamate 302 and aspartate 354 each coordinate Zn(2+). Substrate contacts are provided by aspartate 354, histidine 357, lysine 382, and tyrosine 389. Histidine 448 contacts Zn(2+).

This sequence belongs to the peptidase M18 family. In terms of assembly, tetrahedron-shaped homododecamer built from six homodimers. The cofactor is Zn(2+).

The protein resides in the cytoplasm. The enzyme catalyses Release of an N-terminal aspartate or glutamate from a peptide, with a preference for aspartate.. Functionally, likely to play an important role in intracellular protein and peptide metabolism. This Dictyostelium discoideum (Social amoeba) protein is Aspartyl aminopeptidase (dnpep).